The primary structure comprises 202 residues: 3-isopropylmalate dehydratase small subunit (202 aa).

It belongs to the LeuD family. LeuD type 1 subfamily. In terms of assembly, heterodimer of LeuC and LeuD.

The catalysed reaction is (2R,3S)-3-isopropylmalate = (2S)-2-isopropylmalate. The protein operates within amino-acid biosynthesis; L-leucine biosynthesis; L-leucine from 3-methyl-2-oxobutanoate: step 2/4. Catalyzes the isomerization between 2-isopropylmalate and 3-isopropylmalate, via the formation of 2-isopropylmaleate. This chain is 3-isopropylmalate dehydratase small subunit, found in Nocardia farcinica (strain IFM 10152).